The primary structure comprises 270 residues: tRNA pseudouridine synthase A (270 aa).

D60 serves as the catalytic Nucleophile. The segment at 107-111 is RNA binding; sequence FHARF. Residue Y118 coordinates substrate. Positions 168-172 are interaction with tRNA; sequence QCQSR.

It belongs to the tRNA pseudouridine synthase TruA family. Homodimer.

It carries out the reaction uridine(38/39/40) in tRNA = pseudouridine(38/39/40) in tRNA. Formation of pseudouridine at positions 38, 39 and 40 in the anticodon stem and loop of transfer RNAs. The sequence is that of tRNA pseudouridine synthase A from Escherichia coli (strain 55989 / EAEC).